The chain runs to 502 residues: 4,4'-diapophytoene desaturase (4,4'-diaponeurosporene-forming) (502 aa).

5 to 17 (VIGAGVTGLAAAA) contributes to the FAD binding site.

This sequence belongs to the carotenoid/retinoid oxidoreductase family. CrtN subfamily.

The catalysed reaction is 15-cis-4,4'-diapophytoene + 3 FAD + 3 H(+) = all-trans-4,4'-diaponeurosporene + 3 FADH2. Its pathway is carotenoid biosynthesis; staphyloxanthin biosynthesis; staphyloxanthin from farnesyl diphosphate: step 2/5. Functionally, involved in the biosynthesis of the yellow-orange carotenoid staphyloxanthin, which plays a role in the virulence via its protective function against oxidative stress. Catalyzes three successive dehydrogenation reactions that lead to the introduction of three double bonds into 4,4'-diapophytoene (dehydrosqualene), with 4,4'-diapophytofluene and 4,4'-diapo-zeta-carotene as intermediates, and 4,4'-diaponeurosporene (the major deep-yellow pigment in staphylococci strains) as the end product. This is 4,4'-diapophytoene desaturase (4,4'-diaponeurosporene-forming) from Staphylococcus aureus (strain MW2).